Here is a 391-residue protein sequence, read N- to C-terminus: Small ribosomal subunit protein mS29 (391 aa).

The N-terminal 17 residues, 1 to 17 (MLTGITRLFSRVQKLDP), are a transit peptide targeting the mitochondrion. Residues 30–59 (NSQVPAERPRTVSRTSDSDPAKHGEQHEGQ) are disordered. Over residues 45-59 (SDSDPAKHGEQHEGQ) the composition is skewed to basic and acidic residues. An N6-acetyllysine mark is found at Lys168 and Lys200.

This sequence belongs to the mitochondrion-specific ribosomal protein mS29 family. As to quaternary structure, component of the mitochondrial ribosome small subunit (28S) which comprises a 12S rRNA and about 30 distinct proteins. Interacts with DELE1. Interacts with NOA1.

It is found in the mitochondrion. It carries out the reaction GTP + H2O = GDP + phosphate + H(+). In terms of biological role, as a component of the mitochondrial small ribosomal subunit, it plays a role in the translation of mitochondrial mRNAs. Involved in mediating interferon-gamma-induced cell death. Displays GTPase activity in vitro. The protein is Small ribosomal subunit protein mS29 of Mus musculus (Mouse).